The primary structure comprises 631 residues: Chaperone protein HtpG (631 aa).

The a; substrate-binding stretch occupies residues 1–339 (MSTNQETRGF…SNDLPLNVSR (339 aa)). The interval 340 to 555 (EILQDNKVTS…DDQMTTQMAK (216 aa)) is b. The segment at 556–631 (LFAAAGQAMP…NTLLSKLTSH (76 aa)) is c.

It belongs to the heat shock protein 90 family. In terms of assembly, homodimer.

The protein resides in the cytoplasm. Molecular chaperone. Has ATPase activity. This chain is Chaperone protein HtpG, found in Pasteurella multocida (strain Pm70).